Reading from the N-terminus, the 64-residue chain is Large ribosomal subunit protein bL35 (64 aa).

Residues 1 to 28 (MPKMKTHSGAKKRFKLTGSGKLKRQQAN) are disordered.

The protein belongs to the bacterial ribosomal protein bL35 family.

The sequence is that of Large ribosomal subunit protein bL35 from Renibacterium salmoninarum (strain ATCC 33209 / DSM 20767 / JCM 11484 / NBRC 15589 / NCIMB 2235).